A 216-amino-acid polypeptide reads, in one-letter code: 3-isopropylmalate dehydratase small subunit (216 aa).

The protein belongs to the LeuD family. LeuD type 1 subfamily. In terms of assembly, heterodimer of LeuC and LeuD.

It catalyses the reaction (2R,3S)-3-isopropylmalate = (2S)-2-isopropylmalate. It participates in amino-acid biosynthesis; L-leucine biosynthesis; L-leucine from 3-methyl-2-oxobutanoate: step 2/4. Its function is as follows. Catalyzes the isomerization between 2-isopropylmalate and 3-isopropylmalate, via the formation of 2-isopropylmaleate. The chain is 3-isopropylmalate dehydratase small subunit from Burkholderia ambifaria (strain MC40-6).